A 604-amino-acid polypeptide reads, in one-letter code: Elongation factor 4 (604 aa).

A tr-type G domain is found at 8–190 (DKIRNFSIIA…AIVNRLPPPR (183 aa)). Residues 20 to 25 (DHGKST) and 137 to 140 (NKID) contribute to the GTP site.

Belongs to the TRAFAC class translation factor GTPase superfamily. Classic translation factor GTPase family. LepA subfamily.

The protein localises to the cell inner membrane. The enzyme catalyses GTP + H2O = GDP + phosphate + H(+). Its function is as follows. Required for accurate and efficient protein synthesis under certain stress conditions. May act as a fidelity factor of the translation reaction, by catalyzing a one-codon backward translocation of tRNAs on improperly translocated ribosomes. Back-translocation proceeds from a post-translocation (POST) complex to a pre-translocation (PRE) complex, thus giving elongation factor G a second chance to translocate the tRNAs correctly. Binds to ribosomes in a GTP-dependent manner. In Hyphomonas neptunium (strain ATCC 15444), this protein is Elongation factor 4.